We begin with the raw amino-acid sequence, 315 residues long: Ribosomal RNA small subunit methyltransferase H (315 aa).

S-adenosyl-L-methionine is bound by residues 36-38, Asp56, Phe81, Asp103, and Gln110; that span reads GGH.

This sequence belongs to the methyltransferase superfamily. RsmH family.

The protein resides in the cytoplasm. The enzyme catalyses cytidine(1402) in 16S rRNA + S-adenosyl-L-methionine = N(4)-methylcytidine(1402) in 16S rRNA + S-adenosyl-L-homocysteine + H(+). Its function is as follows. Specifically methylates the N4 position of cytidine in position 1402 (C1402) of 16S rRNA. In Idiomarina loihiensis (strain ATCC BAA-735 / DSM 15497 / L2-TR), this protein is Ribosomal RNA small subunit methyltransferase H.